The following is a 560-amino-acid chain: MFS-type transporter pgmG (560 aa).

A disordered region spans residues 1 to 32; sequence MSETVTQTETDQRPATARSLGAEEKEAKSDEQ. The span at 21–31 shows a compositional bias: basic and acidic residues; the sequence is GAEEKEAKSDE. The next 8 helical transmembrane spans lie at 45–65, 84–104, 111–131, 141–161, 174–194, 201–221, 242–262, and 275–295; these read FIVI…NTIV, WLSV…SKIY, WLYL…GAAP, ALAG…LSVN, TGLT…GFAV, WSFY…LFML, LGTI…NFGG, and CFVV…YCIG. Residue N300 is glycosylated (N-linked (GlcNAc...) asparagine). Residues 313–333 traverse the membrane as a helical segment; that stretch reads FIILFVQTASVATVFFVPIYF. N343 is a glycosylation site (N-linked (GlcNAc...) asparagine). The next 5 membrane-spanning stretches (helical) occupy residues 346–366, 378–398, 409–429, 440–460, and 515–535; these read AIDA…AMIL, MPWY…MYTI, GYMI…FAVA, VATG…LAIA, and ISQV…LAIF.

It belongs to the major facilitator superfamily. TCR/Tet family.

It is found in the membrane. MFS-type transporter; part of the gene cluster that mediates the biosynthesis of pleosporalin A, ascomycone A, as well as a third cryptic naphthoquinone derived pigment, all responsible for the coloration of conidia. Seems not to be involved in pigment biosynthesis although its expression is regulated by the cluster-specific transcription factor pgmR. The polypeptide is MFS-type transporter pgmG (Aspergillus terreus).